The sequence spans 159 residues: Fimbrial protein EcpB (159 aa).

Positions 1–6 (MYKQKG) are cleaved as a propeptide — leader sequence. Phe7 is modified (N-methylphenylalanine). Residues 7 to 29 (FTLIELMIVIAIIGILAAIALPL) traverse the membrane as a helical segment. Cysteines 137 and 156 form a disulfide.

It belongs to the N-Me-Phe pilin family.

The protein localises to the fimbrium. It localises to the membrane. The chain is Fimbrial protein EcpB (ecpB) from Eikenella corrodens.